The chain runs to 312 residues: Retron Ec83 reverse transcriptase (312 aa).

A Reverse transcriptase domain is found at P14–L239. The Mg(2+) site is built by D97, D185, and D186.

The protein belongs to the bacterial reverse transcriptase family.

It catalyses the reaction DNA(n) + a 2'-deoxyribonucleoside 5'-triphosphate = DNA(n+1) + diphosphate. Reverse transcriptase (RT) component of antiviral defense system retron Ec83, composed of a non-coding RNA (ncRNA), this reverse transcriptase (RT), a probable ATPase and a putative HNH endonuclease. Expression of retron Ec83 confers protection against bacteriophages T2, T4 and T6. At multiplicity of infection (MOI) of 0.02 cultures slow growth when infected with T4 but do not collapse, at MOI 2 cultures enter growth stasis. Responsible for synthesis of msDNA-Ec83 (a linear ssDNA with a 5'-terminal phosphate residue). Unlike most known msDNAs the mature product from the original strain does not have an RNA component. When the ncRNA plus RT are expressed in strain K12 / JM109 only linear DNA is seen in stationary phase cells, but logarithmic phase cells have both a linear and branched msDNA (a branched molecule with RNA linked by a 2',5'-phosphodiester bond to ssDNA, a 'classic' retron). The branched msDNA is probably the precursor for the mature linear msDNA, the precursor is cleaved endonucleolytically by ExoVII (xseA-xseB) leaving the observed mature 5'-phosphate ssDNA terminus. The retron transcript serves as primer (from a conserved internal G residue) and template for the reaction, and codes for the RT. Overexpression of the ncRNA and RT, which leads to increased levels of msDNA, is mutagenic in vivo. This may be due to a mismatch in the msDNA stem which binds and sequesters MutS and/or MutL. This chain is Retron Ec83 reverse transcriptase, found in Escherichia coli.